A 557-amino-acid polypeptide reads, in one-letter code: Dihydroxy-acid dehydratase (557 aa).

Residue Cys49 coordinates [2Fe-2S] cluster. Asp81 serves as a coordination point for Mg(2+). Position 122 (Cys122) interacts with [2Fe-2S] cluster. 2 residues coordinate Mg(2+): Asp123 and Lys124. Lys124 is subject to N6-carboxylysine. [2Fe-2S] cluster is bound at residue Cys194. Position 446 (Glu446) interacts with Mg(2+). The active-site Proton acceptor is the Ser472.

Belongs to the IlvD/Edd family. As to quaternary structure, homodimer. [2Fe-2S] cluster is required as a cofactor. It depends on Mg(2+) as a cofactor.

The enzyme catalyses (2R)-2,3-dihydroxy-3-methylbutanoate = 3-methyl-2-oxobutanoate + H2O. It carries out the reaction (2R,3R)-2,3-dihydroxy-3-methylpentanoate = (S)-3-methyl-2-oxopentanoate + H2O. Its pathway is amino-acid biosynthesis; L-isoleucine biosynthesis; L-isoleucine from 2-oxobutanoate: step 3/4. It participates in amino-acid biosynthesis; L-valine biosynthesis; L-valine from pyruvate: step 3/4. Functionally, functions in the biosynthesis of branched-chain amino acids. Catalyzes the dehydration of (2R,3R)-2,3-dihydroxy-3-methylpentanoate (2,3-dihydroxy-3-methylvalerate) into 2-oxo-3-methylpentanoate (2-oxo-3-methylvalerate) and of (2R)-2,3-dihydroxy-3-methylbutanoate (2,3-dihydroxyisovalerate) into 2-oxo-3-methylbutanoate (2-oxoisovalerate), the penultimate precursor to L-isoleucine and L-valine, respectively. The sequence is that of Dihydroxy-acid dehydratase from Prochlorococcus marinus (strain AS9601).